The following is a 523-amino-acid chain: MARQALDLFDEGFQELTPSEFFRKNKQMLGFTGKIRSLTIVFHELITNSFDAAEEAGILPEIKIDLKRIGKDHYILRHQDNGPGIPEKYIPKVFCTMFAGSKFRNIQSRGQQGLGCSGCVLLSQMTTGKPVKVISGTMENGELKGVKMTLKMDVKKNQGLILEKEEVEVDGTGVCIELHFKDVSYSLSEQGAYEYIRRTMIANPHARIVFNDPTGNRYVFNRASDVIPPMPKEVLPHPWGVTADDLIFMAKHTDKRRFGSMLKSNLSRMSSMKIKELEELTGIDLNKRPKDMKWEEAEQIVEAFKKMKFMSPPTSGLIPIGEEQIDKGMKEILQPEFTATVTRKPKTYRGGIAFIVEAGIAYGGNSGRLVGDQRKAEIMRFANRVPLTFDAGSCAITEGVKSLDWKRYGIRDLENAPISIFVNVVSTNVPYLSTGKQSVSPEPEILGEIRQATMIVARKLHKYLRKKKAAKEEAQRAKIFESYVPVIIKQAALLAEREEPDYRELLDTVTRRAKLEILGGITE.

Residues N48, D80, 101–102, 110–117, and K436 contribute to the ATP site; these read SK and GQQGLGCS.

Belongs to the TOP6B family. In terms of assembly, homodimer. Heterotetramer of two Top6A and two Top6B chains.

It catalyses the reaction ATP-dependent breakage, passage and rejoining of double-stranded DNA.. Relaxes both positive and negative superturns and exhibits a strong decatenase activity. This chain is Type 2 DNA topoisomerase 6 subunit B, found in Methanothermobacter thermautotrophicus (strain ATCC 29096 / DSM 1053 / JCM 10044 / NBRC 100330 / Delta H) (Methanobacterium thermoautotrophicum).